Consider the following 65-residue polypeptide: Large ribosomal subunit protein bL35 (65 aa).

The protein belongs to the bacterial ribosomal protein bL35 family.

In Alkalilimnicola ehrlichii (strain ATCC BAA-1101 / DSM 17681 / MLHE-1), this protein is Large ribosomal subunit protein bL35.